Here is a 248-residue protein sequence, read N- to C-terminus: CKLF-like MARVEL transmembrane domain-containing protein 2 (248 aa).

A disordered region spans residues 1 to 63 (MAPKAAKGAK…KAVQPKHEVG (63 aa)). A compositionally biased stretch (pro residues) spans 12–22 (EPAPAPPPPGA). Basic and acidic residues predominate over residues 23-63 (KPEEDKKDGKEPSDKPQKAVQDHKEPSDKPQKAVQPKHEVG). In terms of domain architecture, MARVEL spans 82-204 (FWLLGHAEIK…DVCLQRNHFR (123 aa)). 3 consecutive transmembrane segments (helical) span residues 116 to 136 (LIITMEISFFSFFILLYSFAI), 147 to 167 (ISDLFNDLIACAFLVGAVVFA), and 178 to 198 (YLLAVILIGAAGVFAFIDVCL). The segment at 208-248 (AKKHMLVPPPGKEKGPQQGKGPEPAKPPEPGKPPGPAKGKK) is disordered. The span at 231-248 (PAKPPEPGKPPGPAKGKK) shows a compositional bias: pro residues.

The protein belongs to the chemokine-like factor family. As to expression, highly expressed in testis.

It localises to the membrane. The polypeptide is CKLF-like MARVEL transmembrane domain-containing protein 2 (CMTM2) (Homo sapiens (Human)).